Reading from the N-terminus, the 294-residue chain is 4-hydroxy-tetrahydrodipicolinate synthase (294 aa).

Thr-45 is a binding site for pyruvate. Tyr-133 serves as the catalytic Proton donor/acceptor. Residue Lys-162 is the Schiff-base intermediate with substrate of the active site. Ile-204 contacts pyruvate.

The protein belongs to the DapA family. As to quaternary structure, homotetramer; dimer of dimers.

The protein resides in the cytoplasm. It catalyses the reaction L-aspartate 4-semialdehyde + pyruvate = (2S,4S)-4-hydroxy-2,3,4,5-tetrahydrodipicolinate + H2O + H(+). It participates in amino-acid biosynthesis; L-lysine biosynthesis via DAP pathway; (S)-tetrahydrodipicolinate from L-aspartate: step 3/4. Functionally, catalyzes the condensation of (S)-aspartate-beta-semialdehyde [(S)-ASA] and pyruvate to 4-hydroxy-tetrahydrodipicolinate (HTPA). The sequence is that of 4-hydroxy-tetrahydrodipicolinate synthase from Rhizobium meliloti (strain 1021) (Ensifer meliloti).